Reading from the N-terminus, the 179-residue chain is Large ribosomal subunit protein uL5 (179 aa).

Belongs to the universal ribosomal protein uL5 family. In terms of assembly, part of the 50S ribosomal subunit; part of the 5S rRNA/L5/L18/L25 subcomplex. Contacts the 5S rRNA and the P site tRNA. Forms a bridge to the 30S subunit in the 70S ribosome.

Functionally, this is one of the proteins that bind and probably mediate the attachment of the 5S RNA into the large ribosomal subunit, where it forms part of the central protuberance. In the 70S ribosome it contacts protein S13 of the 30S subunit (bridge B1b), connecting the 2 subunits; this bridge is implicated in subunit movement. Contacts the P site tRNA; the 5S rRNA and some of its associated proteins might help stabilize positioning of ribosome-bound tRNAs. This is Large ribosomal subunit protein uL5 from Dichelobacter nodosus (strain VCS1703A).